We begin with the raw amino-acid sequence, 363 residues long: Uroporphyrinogen decarboxylase (363 aa).

Residues 27 to 31 (RQAGR), Asp77, Tyr157, Thr212, and His333 contribute to the substrate site.

This sequence belongs to the uroporphyrinogen decarboxylase family. In terms of assembly, homodimer.

Its subcellular location is the cytoplasm. It carries out the reaction uroporphyrinogen III + 4 H(+) = coproporphyrinogen III + 4 CO2. It functions in the pathway porphyrin-containing compound metabolism; protoporphyrin-IX biosynthesis; coproporphyrinogen-III from 5-aminolevulinate: step 4/4. In terms of biological role, catalyzes the decarboxylation of four acetate groups of uroporphyrinogen-III to yield coproporphyrinogen-III. The sequence is that of Uroporphyrinogen decarboxylase from Cupriavidus necator (strain ATCC 17699 / DSM 428 / KCTC 22496 / NCIMB 10442 / H16 / Stanier 337) (Ralstonia eutropha).